We begin with the raw amino-acid sequence, 85 residues long: N.vectensis toxin 1 6 (85 aa).

The signal sequence occupies residues 1-20; it reads MASFKIVIVCLALLVAVACA. Positions 21-36 are excised as a propeptide; the sequence is RRRDMMSDDELDYHYS. Cystine bridges form between Cys-42/Cys-82, Cys-44/Cys-72, and Cys-65/Cys-83.

Belongs to the sea anemone sodium channel inhibitory toxin family. Type II subfamily. In terms of tissue distribution, expressed in ectodermal glands and in clumps outside of the extodermal layer. Is not expressed in nematocytes. In adult female tissues, shows similar expression levels in mesenteries (gametes-producing tissue), tentacles, pharynx and physa.

The protein resides in the secreted. Its function is as follows. Binds to site 3 of voltage-gated sodium channels and inhibits the inactivation process. Is highly active on DmNav1/TipE (drosophila) and is only extremely weakly active on rat Nav1.4-beta-1/SCN4A-SCN1B, and on human Nav1.5-beta-1/SCN5A-beta-1. This reveals high specificity for arthropod over mammalian channels. In vivo, when released into the medium, this recombinant toxin induces impaired swimming, paralysis and death of the crustacean A.nauplii within several hours. Also causes paralysis of cherry shrimps immediately after injection at very low doses. Its effect on zebrafish (D.rerio) larvae is also rapid, since it induces tail twitching accompanied by impaired swimming after 20 minutes and complete paralysis within 45 minutes. It has also been observed to cause death of zebrafish larvae within 1 hour. The sequence is that of N.vectensis toxin 1 6 from Nematostella vectensis (Starlet sea anemone).